A 120-amino-acid chain; its full sequence is Ribonuclease P protein component 2 (120 aa).

Belongs to the eukaryotic/archaeal RNase P protein component 2 family. As to quaternary structure, consists of a catalytic RNA component and at least 4-5 protein subunits.

Its subcellular location is the cytoplasm. The catalysed reaction is Endonucleolytic cleavage of RNA, removing 5'-extranucleotides from tRNA precursor.. In terms of biological role, part of ribonuclease P, a protein complex that generates mature tRNA molecules by cleaving their 5'-ends. This chain is Ribonuclease P protein component 2, found in Thermococcus kodakarensis (strain ATCC BAA-918 / JCM 12380 / KOD1) (Pyrococcus kodakaraensis (strain KOD1)).